The following is a 249-amino-acid chain: Probable transcriptional regulatory protein Meso_3192 (249 aa).

This sequence belongs to the TACO1 family.

The protein resides in the cytoplasm. The protein is Probable transcriptional regulatory protein Meso_3192 of Chelativorans sp. (strain BNC1).